We begin with the raw amino-acid sequence, 90 residues long: Putative Fis-like DNA-binding protein (90 aa).

A DNA-binding region (H-T-H motif) is located at residues 66-85 (QSRAAALLGIHRATLRKKLK).

The protein belongs to the transcriptional regulatory Fis family.

This chain is Putative Fis-like DNA-binding protein, found in Xylella fastidiosa (strain Temecula1 / ATCC 700964).